The primary structure comprises 137 residues: Large ribosomal subunit protein uL16 (137 aa).

This sequence belongs to the universal ribosomal protein uL16 family. As to quaternary structure, part of the 50S ribosomal subunit.

Its function is as follows. Binds 23S rRNA and is also seen to make contacts with the A and possibly P site tRNAs. The chain is Large ribosomal subunit protein uL16 from Bradyrhizobium sp. (strain ORS 278).